Consider the following 675-residue polypeptide: Methionine--tRNA ligase (675 aa).

The 'HIGH' region signature appears at 15–25; it reads PYANGSIHLGH. Zn(2+) is bound by residues C146, C149, C159, and C162. Residues 332-336 carry the 'KMSKS' region motif; sequence KMSKS. K335 provides a ligand contact to ATP. One can recognise a tRNA-binding domain in the interval 573–675; sequence DFAKVDMRIA…SGAQPGMQVK (103 aa).

The protein belongs to the class-I aminoacyl-tRNA synthetase family. MetG type 1 subfamily. In terms of assembly, homodimer. Requires Zn(2+) as cofactor.

The protein resides in the cytoplasm. The catalysed reaction is tRNA(Met) + L-methionine + ATP = L-methionyl-tRNA(Met) + AMP + diphosphate. Functionally, is required not only for elongation of protein synthesis but also for the initiation of all mRNA translation through initiator tRNA(fMet) aminoacylation. This is Methionine--tRNA ligase from Yersinia pseudotuberculosis serotype I (strain IP32953).